The chain runs to 89 residues: Small ribosomal subunit protein uS15 (89 aa).

The protein belongs to the universal ribosomal protein uS15 family. As to quaternary structure, part of the 30S ribosomal subunit. Forms a bridge to the 50S subunit in the 70S ribosome, contacting the 23S rRNA.

In terms of biological role, one of the primary rRNA binding proteins, it binds directly to 16S rRNA where it helps nucleate assembly of the platform of the 30S subunit by binding and bridging several RNA helices of the 16S rRNA. Its function is as follows. Forms an intersubunit bridge (bridge B4) with the 23S rRNA of the 50S subunit in the ribosome. This is Small ribosomal subunit protein uS15 from Rhizorhabdus wittichii (strain DSM 6014 / CCUG 31198 / JCM 15750 / NBRC 105917 / EY 4224 / RW1) (Sphingomonas wittichii).